A 264-amino-acid chain; its full sequence is SPARC (264 aa).

The first 16 residues, 1-16 (MRYALAACLLLLAASS), serve as a signal peptide directing secretion. Positions 52–74 (PCEDHQCGWGKECVVGKKGEPTC) constitute a Follistatin-like domain. Disulfide bonds link Cys53–Cys64, Cys58–Cys74, Cys76–Cys110, Cys80–Cys103, Cys92–Cys135, Cys141–Cys228, and Cys236–Cys252. In terms of domain architecture, Kazal-like spans 68–137 (KKGEPTCECI…HLEYLGECKK (70 aa)). Asn96 carries N-linked (GlcNAc...) asparagine glycosylation. An EF-hand domain is found at 224-259 (PMESCIKPFLEGCDANNDGNISIKEWGKCLGLKEGE). Ca(2+) is bound by residues Asp237, Asn239, Asp241, Asn243, and Glu248. Residue Asn243 is glycosylated (N-linked (GlcNAc...) asparagine).

The protein belongs to the SPARC family. Expressed by body wall and sex muscle cells. Probable association with basement membranes.

It is found in the secreted. Its subcellular location is the extracellular space. The protein resides in the extracellular matrix. It localises to the basement membrane. Has a high affinity for collagen. Affects nematode body morphology and mobility. Essential for C.elegans development and muscle function. The cysteine-rich region could have protease inhibitory activity or may provide the framework for a protein binding module. Probable role in skeletal morphogenesis. This Caenorhabditis elegans protein is SPARC (ost-1).